A 535-amino-acid chain; its full sequence is Probable monogalactosyldiacylglycerol synthase, chloroplastic (535 aa).

The transit peptide at 1-113 (MMQHSSSVTQ…KIPLGFASVG (113 aa)) directs the protein to the chloroplast.

This sequence belongs to the glycosyltransferase 28 family.

Its subcellular location is the plastid. The protein resides in the chloroplast membrane. The enzyme catalyses a 1,2-diacyl-sn-glycerol + UDP-alpha-D-galactose = a 1,2-diacyl-3-O-(beta-D-galactosyl)-sn-glycerol + UDP + H(+). Involved in the synthesis of the major structural component of photosynthetic membranes. This chain is Probable monogalactosyldiacylglycerol synthase, chloroplastic (MGD A), found in Nicotiana tabacum (Common tobacco).